A 911-amino-acid polypeptide reads, in one-letter code: Brevican core protein (911 aa).

A signal peptide spans 1–22 (MAQLFLPLLAALVLAQAPAALA). The region spanning 36–155 (RVRIAGDAPL…SSDAVEVKVK (120 aa)) is the Ig-like V-type domain. 5 disulfide bridges follow: Cys57-Cys137, Cys179-Cys250, Cys203-Cys224, Cys277-Cys352, and Cys301-Cys322. A glycan (N-linked (GlcNAc...) asparagine) is linked at Asn130. 2 consecutive Link domains span residues 157 to 252 (VVFL…YCYA) and 257 to 354 (GELF…YCFR). N-linked (GlcNAc...) asparagine glycosylation is present at Asn337. A disordered region spans residues 391 to 641 (QLPQEATESE…PTDSASRGGV (251 aa)). Phosphoserine is present on Ser418. A glycan (O-linked (Xyl...) (chondroitin sulfate) serine) is linked at Ser418. The segment covering 454–478 (EEEEKYEDEEEKEEEEEEEEVEDEA) has biased composition (acidic residues). O-glycosylated at two sites stretches follow at residues 520-530 (SPLPDGESEAS) and 540-545 (TETLPT). Residues 569 to 575 (TGGPELS) form an O-glycosylated at one site region. Polar residues predominate over residues 612-627 (EDNSGRTAPAGTSVQA). Residue Ala646 is the site of GPI-anchor amidated alanine attachment. The EGF-like domain maps to 646–682 (ASGDCVPSPCHNGGTCLEEEEGVRCLCLPGYGGDLCD). Intrachain disulfides connect Cys650-Cys661, Cys655-Cys670, Cys672-Cys681, Cys688-Cys699, Cys716-Cys808, Cys784-Cys800, Cys815-Cys858, and Cys844-Cys871. The C-type lectin domain occupies 695-809 (FQGACYKHFS…CNYHLSYTCK (115 aa)). Residues 813–873 (VSCGPPPELP…WEAPQISCVP (61 aa)) enclose the Sushi domain. 2 O-linked (GalNAc...) serine glycosylation sites follow: Ser905 and Ser906.

It belongs to the aggrecan/versican proteoglycan family. In terms of assembly, interacts with TNR. O-glycosylated; contains chondroitin sulfate. O-glycosylated with a core 1 or possibly core 8 glycan. As to expression, expressed in the retina, specifically in the inner nuclear layer, inner plexiform layer and ganglion cell layer (at protein level). Detected in cerebrospinal fluid (at protein level). Detected in urine (at protein level).

Its subcellular location is the secreted. The protein localises to the extracellular space. It localises to the extracellular matrix. It is found in the membrane. In terms of biological role, may play a role in the terminally differentiating and the adult nervous system during postnatal development. Could stabilize interactions between hyaluronan (HA) and brain proteoglycans. The polypeptide is Brevican core protein (BCAN) (Homo sapiens (Human)).